The chain runs to 173 residues: Crossover junction endodeoxyribonuclease RuvC (173 aa).

Active-site residues include Asp11, Glu71, and Asp143. Mg(2+) is bound by residues Asp11, Glu71, and Asp143.

The protein belongs to the RuvC family. Homodimer which binds Holliday junction (HJ) DNA. The HJ becomes 2-fold symmetrical on binding to RuvC with unstacked arms; it has a different conformation from HJ DNA in complex with RuvA. In the full resolvosome a probable DNA-RuvA(4)-RuvB(12)-RuvC(2) complex forms which resolves the HJ. It depends on Mg(2+) as a cofactor.

The protein resides in the cytoplasm. The catalysed reaction is Endonucleolytic cleavage at a junction such as a reciprocal single-stranded crossover between two homologous DNA duplexes (Holliday junction).. In terms of biological role, the RuvA-RuvB-RuvC complex processes Holliday junction (HJ) DNA during genetic recombination and DNA repair. Endonuclease that resolves HJ intermediates. Cleaves cruciform DNA by making single-stranded nicks across the HJ at symmetrical positions within the homologous arms, yielding a 5'-phosphate and a 3'-hydroxyl group; requires a central core of homology in the junction. The consensus cleavage sequence is 5'-(A/T)TT(C/G)-3'. Cleavage occurs on the 3'-side of the TT dinucleotide at the point of strand exchange. HJ branch migration catalyzed by RuvA-RuvB allows RuvC to scan DNA until it finds its consensus sequence, where it cleaves and resolves the cruciform DNA. The sequence is that of Crossover junction endodeoxyribonuclease RuvC from Brucella abortus (strain 2308).